The following is a 205-amino-acid chain: N-(5'-phosphoribosyl)anthranilate isomerase (205 aa).

The protein belongs to the TrpF family.

The catalysed reaction is N-(5-phospho-beta-D-ribosyl)anthranilate = 1-(2-carboxyphenylamino)-1-deoxy-D-ribulose 5-phosphate. It participates in amino-acid biosynthesis; L-tryptophan biosynthesis; L-tryptophan from chorismate: step 3/5. The chain is N-(5'-phosphoribosyl)anthranilate isomerase from Trichlorobacter lovleyi (strain ATCC BAA-1151 / DSM 17278 / SZ) (Geobacter lovleyi).